The following is a 494-amino-acid chain: Sugar phosphate exchanger 3 (494 aa).

A helical transmembrane segment spans residues 16–36 (FSHHHVVVFLLTFFSYSLLHA). An N-linked (GlcNAc...) asparagine glycan is attached at Asn-58. The next 5 membrane-spanning stretches (helical) occupy residues 81-101 (TLFLGTLDTIFLFSYAVGLFI), 113-133 (WVLSFGMCSSALVVFVFGALT), 147-167 (LWIVNGLLQSTGWPCVVAVMG), 177-197 (VVFGLWSACASVGNILGACLA), and 209-229 (FLVTASVQFAGGIVIFFGLLV). Asn-266 carries an N-linked (GlcNAc...) asparagine glycan. The next 6 helical transmembrane spans lie at 297-317 (LAYACLKLVNYSFFFWLPFYL), 333-353 (IWYDVGGIIGGTLQGFISDVL), 357-377 (APVLALSLLLAVGSLIGYSRS), 386-406 (LLMTVTGFFIGGPSNMISSAI), 428-448 (GIVDGSGSIGAAVGQYLVSLI), and 452-472 (LGWMWVFYFFILMTSCTIVFI).

This sequence belongs to the major facilitator superfamily. Organophosphate:Pi antiporter (OPA) (TC 2.A.1.4) family. In terms of assembly, interacts with ATRAID; the interaction is direct and both proteins are mutually dependent for their stability. In terms of processing, glycosylated. As to expression, expressed in liver, kidney, intestine and pancreas.

It localises to the endoplasmic reticulum membrane. The protein resides in the lysosome membrane. Unlike the other SLC37 members, lacks glucose-6-phosphate antiporter activity. In osteoclasts, forms a transporter complex with ATRAID for nitrogen-containing-bisphophonates (N-BPs) required for releasing N-BP molecules that have trafficked to lysosomes through fluid-phase endocytosis into the cytosol. In Homo sapiens (Human), this protein is Sugar phosphate exchanger 3.